The following is a 102-amino-acid chain: PqqA binding protein (102 aa).

This sequence belongs to the PqqD family. As to quaternary structure, monomer. Interacts with PqqE.

Its pathway is cofactor biosynthesis; pyrroloquinoline quinone biosynthesis. Functions as a PqqA binding protein and presents PqqA to PqqE, in the pyrroloquinoline quinone (PQQ) biosynthetic pathway. This Rhodopseudomonas palustris (strain TIE-1) protein is PqqA binding protein.